The primary structure comprises 277 residues: Adaptin ear-binding coat-associated protein 1 (277 aa).

The disordered stretch occupies residues 164–277 (GNITAKKGGT…APQPSNWVQF (114 aa)). Residues 187-201 (LPPPPGGKVTIPPPS) show a composition bias toward pro residues. Thr211 carries the phosphothreonine modification. Positions 222 to 234 (SNDSDILLDLDSP) are enriched in low complexity. The segment covering 235–245 (APVPTSAPAPA) has biased composition (pro residues). Short sequence motifs (WXXF motif) lie at residues 254–257 (WGDF) and 274–277 (WVQF). Polar residues predominate over residues 258-277 (STASSSVPNQAPQPSNWVQF).

Belongs to the NECAP family. Interacts with AP1G1 and AP2A1 components of the adapter protein complexes AP-1 and AP-2. Interacts with the GAE domain proteins GGA1, GGA2 and GGA3. Interacts with AP2A2. In terms of tissue distribution, expressed predominantly in brain (at protein level).

It is found in the cytoplasmic vesicle. It localises to the clathrin-coated vesicle membrane. The protein resides in the cell membrane. Its function is as follows. Involved in endocytosis. The protein is Adaptin ear-binding coat-associated protein 1 (Necap1) of Rattus norvegicus (Rat).